A 533-amino-acid chain; its full sequence is Quinate permease (533 aa).

The Cytoplasmic portion of the chain corresponds to 1–21; sequence MSILALVEDRPTPREVYNWRV. The helical transmembrane segment at 22-42 threads the bilayer; the sequence is YLLAAVASFTSCMIGYDSAFI. At 43–67 the chain is on the extracellular side; sequence GTTLSLQSFQNEFNWESLNTDLISA. Residues 68-88 form a helical membrane-spanning segment; that stretch reads NIVSLYQAGAFFGALFAYPIG. Residues 89–94 are Cytoplasmic-facing; sequence HFWGRR. A helical membrane pass occupies residues 95–115; it reads WGLMFSALIFFLGAGMMLGAN. Topologically, residues 116–127 are extracellular; it reads GDRGLGLIYGGR. A helical transmembrane segment spans residues 128–148; that stretch reads VLAGIGVGAGSNICPIYISEM. At 149 to 156 the chain is on the cytoplasmic side; it reads APPAIRGR. Residues 157-177 form a helical membrane-spanning segment; sequence LVGVYELGWQIGGVVGFWINY. The Extracellular portion of the chain corresponds to 178-191; that stretch reads GVDETLAPSHKQWI. Residues 192–212 form a helical membrane-spanning segment; it reads IPFAVQLIPAGLLIIGALLIR. At 213 to 282 the chain is on the cytoplasmic side; sequence ESPRWLFLRG…AWTNKRILYR (70 aa). A helical membrane pass occupies residues 283–303; it reads LFLGSMLFLWQNGSGINAINY. Over 304–324 the chain is Extracellular; that stretch reads YSPRVFKSIGVSGGNTSLLTT. Residues 325 to 346 traverse the membrane as a helical segment; sequence GIFGVVKAVITFVWLLYLIDHF. The Cytoplasmic segment spans residues 347–349; that stretch reads GRR. A helical membrane pass occupies residues 350–370; it reads NLLLVGAAGGSVCLWIVGGYI. Over 371–385 the chain is Extracellular; that stretch reads KIAKPENNPEGTQLD. Residues 386–406 form a helical membrane-spanning segment; that stretch reads SGGIAAIFFFYLWTAFYTPSW. The Cytoplasmic segment spans residues 407-431; sequence NGTPWVINSEMFDPTVRSLAQACAA. A helical transmembrane segment spans residues 432-452; that stretch reads ASNWLWNFLISRFTPQMFTSM. The Extracellular portion of the chain corresponds to 453–454; sequence GY. A helical transmembrane segment spans residues 455 to 475; that stretch reads GVYFFFASLMILSIVFVFFLI. The Cytoplasmic segment spans residues 476–533; that stretch reads PETKGVPLESMETLFDKKPVWHAHSQLIRELRENEEAFRADMGASGKGGVTKEYVEEA.

It belongs to the major facilitator superfamily. Sugar transporter (TC 2.A.1.1) family. Interacts with creB. Post-translationally, ubiquitinated. Deubiquitinated by creB, probably to control its activity or amount.

It localises to the cell membrane. Functionally, integral membrane transporter that imports quinic acid to be catabolized as a carbon source. The polypeptide is Quinate permease (qutD) (Emericella nidulans (strain FGSC A4 / ATCC 38163 / CBS 112.46 / NRRL 194 / M139) (Aspergillus nidulans)).